Consider the following 228-residue polypeptide: Non-specific lipid-transfer protein EPAD1 (228 aa).

Residues 1–24 (MERSHLAVLLGLLAFAAGVPAAAA) form the signal peptide. 3 disulfides stabilise this stretch: Cys-40-Cys-62, Cys-63-Cys-105, and Cys-78-Cys-119. An N-linked (GlcNAc...) asparagine glycan is attached at Asn-94. The interval 124–207 (PPASIVTAPP…PPRSGASSSL (84 aa)) is disordered. Pro residues predominate over residues 145-162 (REAPPPPPAAEKLSPPPQ).

The protein belongs to the plant LTP family. In terms of tissue distribution, expressed in young panicles. Specifically expressed in pollen mother cells and young microspores.

The protein localises to the cell membrane. Its function is as follows. Plant non-specific lipid-transfer protein that binds phospholipids in vitro. Required for correct pollen exine patterning by controlling the continuity and homogeneity of the primexine distribution. In Oryza sativa subsp. japonica (Rice), this protein is Non-specific lipid-transfer protein EPAD1.